Consider the following 424-residue polypeptide: UPF0053 protein MG146 (424 aa).

One can recognise a CNNM transmembrane domain in the interval 6–191; that stretch reads SGLTLTVIIL…EQNGLFSKED (186 aa). A run of 4 helical transmembrane segments spans residues 7-27, 71-91, 101-121, and 135-155; these read GLTL…STVV, LITI…ILFL, LLSS…FCEI, and LVLF…ITKL. CBS domains follow at residues 210-270 and 272-332; these read MIKW…PKSL and LNQL…IYDE.

It belongs to the UPF0053 family.

It is found in the cell membrane. This chain is UPF0053 protein MG146, found in Mycoplasma genitalium (strain ATCC 33530 / DSM 19775 / NCTC 10195 / G37) (Mycoplasmoides genitalium).